Consider the following 617-residue polypeptide: Sphingosine kinase 2 (617 aa).

Residues 1 to 140 are required for binding to sulfatide and phosphoinositides and for membrane localization; the sequence is MAPPPLLPVA…LSGDQEITPE (140 aa). A Nuclear localization signal motif is present at residues 87–95; that stretch reads RGRRGGRRR. The region spanning 143 to 290 is the DAGKc domain; it reads PRKPRLLILV…LDLLSVTLAS (148 aa). Residues 153–155 and 185–189 contribute to the ATP site; these read NPF and TERQN. 210 to 213 is a substrate binding site; that stretch reads SGDG. Catalysis depends on D212, which acts as the Proton donor/acceptor. ATP-binding positions include E217 and 242-244; that span reads GSG. Position 309 (D309) interacts with substrate. The ATP site is built by R316 and R322. Residues S358 and S364 each carry the phosphoserine modification. Positions 371–472 are disordered; the sequence is APAPAATHSP…GFLPPTHSAP (102 aa). Residue T377 is modified to Phosphothreonine. The Nuclear export signal motif lies at 381–390; the sequence is LHRSVSDLPL. Phosphoserine is present on residues S384 and S386. Residues 412-426 show a composition bias toward gly residues; sequence NGGGPELTGDWGGAG. T578 carries the post-translational modification Phosphothreonine. 586-588 serves as a coordination point for ATP; that stretch reads DGE.

As to quaternary structure, interacts with histone H3. Interacts with HDAC1, HDAC2, MBD2 and SIN3A. Interacts with EEF1A1; the interaction enhances SPHK2 kinase activity. Interacts with PHB2. Requires Mg(2+) as cofactor. Phosphorylated by PKD on Ser-384 and Ser-386 upon PMA treatment. Phosphorylation induces export from the nucleus to the cytoplasm. Phosphorylated by MAPK1 and MAPK2 at Thr-578, phosphorylation is induced by agonists such as EGF and PMA and increases kinase activity. In terms of processing, cleaved by CASP1 in apoptotic cells. The truncated form is released from cells. In terms of tissue distribution, expressed in heart, brain, liver, kidney and testis. Expressed by mast cells (at protein level). In the substantia nigra, expressed by dopaminergic neurons (at protein level).

Its subcellular location is the lysosome membrane. It is found in the cytoplasm. The protein localises to the cell membrane. It localises to the endoplasmic reticulum. The protein resides in the nucleus. Its subcellular location is the mitochondrion inner membrane. The catalysed reaction is a sphingoid base + ATP = a sphingoid 1-phosphate + ADP + H(+). It catalyses the reaction sphing-4-enine + ATP = sphing-4-enine 1-phosphate + ADP + H(+). It carries out the reaction sphinganine + ATP = sphinganine 1-phosphate + ADP + H(+). The enzyme catalyses (4R)-hydroxysphinganine + ATP = (4R)-hydroxysphinganine 1-phosphate + ADP + H(+). Its function is as follows. Catalyzes the phosphorylation of sphingosine to form sphingosine-1-phosphate (SPP), a lipid mediator with both intra- and extracellular functions. Also acts on D-erythro-dihydrosphingosine, D-erythro-sphingosine and L-threo-dihydrosphingosine. Binds phosphoinositides. In contrast to prosurvival SPHK1, has a positive effect on intracellular ceramide levels, inhibits cells growth and enhances apoptosis. In mitochondria, is important for cytochrome-c oxidase assembly and mitochondrial respiration. The SPP produced in mitochondria binds PHB2 and modulates the regulation via PHB2 of complex IV assembly and respiration. In nucleus, plays a role in epigenetic regulation of gene expression. Interacts with HDAC1 and HDAC2 and, through SPP production, inhibits their enzymatic activity, preventing the removal of acetyl groups from lysine residues with histones. Up-regulates acetylation of histone H3-K9, histone H4-K5 and histone H2B-K12. In nucleus, may have an inhibitory effect on DNA synthesis and cell cycle. In mast cells, is the main regulator of SPP production which mediates calcium influx, NF-kappa-B activation, cytokine production, such as TNF and IL6, and degranulation of mast cells. In dopaminergic neurons, is involved in promoting mitochondrial functions regulating ATP and ROS levels. Also involved in the regulation of glucose and lipid metabolism. The polypeptide is Sphingosine kinase 2 (Mus musculus (Mouse)).